Reading from the N-terminus, the 343-residue chain is Uroporphyrinogen decarboxylase (343 aa).

Residues Arg23–Arg27, Asp73, Tyr151, Ser206, and His319 each bind substrate.

Belongs to the uroporphyrinogen decarboxylase family. As to quaternary structure, homodimer.

The protein localises to the cytoplasm. It catalyses the reaction uroporphyrinogen III + 4 H(+) = coproporphyrinogen III + 4 CO2. It participates in porphyrin-containing compound metabolism; protoporphyrin-IX biosynthesis; coproporphyrinogen-III from 5-aminolevulinate: step 4/4. Functionally, catalyzes the decarboxylation of four acetate groups of uroporphyrinogen-III to yield coproporphyrinogen-III. The polypeptide is Uroporphyrinogen decarboxylase (Sulfurimonas denitrificans (strain ATCC 33889 / DSM 1251) (Thiomicrospira denitrificans (strain ATCC 33889 / DSM 1251))).